Here is a 251-residue protein sequence, read N- to C-terminus: Flap endonuclease Xni (251 aa).

Asp-104 serves as a coordination point for Mg(2+). A 5'-3' exonuclease domain is found at 160 to 249; it reads VQPQQLPDYW…IDGNLQQLRL (90 aa). Positions 171, 172, 180, 182, and 185 each coordinate K(+). The interaction with DNA stretch occupies residues 184 to 189; sequence GIGPKS.

The protein belongs to the Xni family. Requires Mg(2+) as cofactor. K(+) serves as cofactor.

Has flap endonuclease activity. During DNA replication, flap endonucleases cleave the 5'-overhanging flap structure that is generated by displacement synthesis when DNA polymerase encounters the 5'-end of a downstream Okazaki fragment. The sequence is that of Flap endonuclease Xni from Escherichia coli O45:K1 (strain S88 / ExPEC).